The sequence spans 686 residues: DNA topoisomerase 1 (686 aa).

The Toprim domain occupies Met1 to Lys141. Residues Glu7 and Asp107 each coordinate Mg(2+). The 419-residue stretch at Asn156 to Leu574 folds into the Topo IA-type catalytic domain. The interval Ser196–Gln201 is interaction with DNA. The active-site O-(5'-phospho-DNA)-tyrosine intermediate is Tyr317. The C4-type 1 zinc finger occupies Cys606 to Cys634. The C4-type 2; atypical zinc finger occupies Cys653–Cys678.

The protein belongs to the type IA topoisomerase family. Monomer. Mg(2+) serves as cofactor.

The enzyme catalyses ATP-independent breakage of single-stranded DNA, followed by passage and rejoining.. In terms of biological role, releases the supercoiling and torsional tension of DNA, which is introduced during the DNA replication and transcription, by transiently cleaving and rejoining one strand of the DNA duplex. Introduces a single-strand break via transesterification at a target site in duplex DNA. The scissile phosphodiester is attacked by the catalytic tyrosine of the enzyme, resulting in the formation of a DNA-(5'-phosphotyrosyl)-enzyme intermediate and the expulsion of a 3'-OH DNA strand. The free DNA strand then undergoes passage around the unbroken strand, thus removing DNA supercoils. Finally, in the religation step, the DNA 3'-OH attacks the covalent intermediate to expel the active-site tyrosine and restore the DNA phosphodiester backbone. The sequence is that of DNA topoisomerase 1 from Pyrococcus horikoshii (strain ATCC 700860 / DSM 12428 / JCM 9974 / NBRC 100139 / OT-3).